The chain runs to 657 residues: Methionine--tRNA ligase (657 aa).

The 'HIGH' region motif lies at 13–23 (YYPSGNLHIGH). A 'KMSKS' region motif is present at residues 308 to 312 (KMSKS). Lys311 is an ATP binding site. The tRNA-binding domain occupies 557–657 (DFDKVEIKAA…SAIPNGAVIK (101 aa)).

This sequence belongs to the class-I aminoacyl-tRNA synthetase family. MetG type 2B subfamily. Homodimer.

It is found in the cytoplasm. The catalysed reaction is tRNA(Met) + L-methionine + ATP = L-methionyl-tRNA(Met) + AMP + diphosphate. Is required not only for elongation of protein synthesis but also for the initiation of all mRNA translation through initiator tRNA(fMet) aminoacylation. This Staphylococcus aureus (strain MRSA252) protein is Methionine--tRNA ligase.